The primary structure comprises 235 residues: Small ribosomal subunit protein uS2c (235 aa).

This sequence belongs to the universal ribosomal protein uS2 family.

Its subcellular location is the plastid. The protein localises to the chloroplast. The sequence is that of Small ribosomal subunit protein uS2c (rps2) from Zygnema circumcarinatum (Green alga).